We begin with the raw amino-acid sequence, 208 residues long: Large ribosomal subunit protein uL4 (208 aa).

Residues 44-79 (QRQGTHKSKERSEISGSTRKIGRQKGGGGARRGDMN) form a disordered region.

This sequence belongs to the universal ribosomal protein uL4 family. In terms of assembly, part of the 50S ribosomal subunit.

One of the primary rRNA binding proteins, this protein initially binds near the 5'-end of the 23S rRNA. It is important during the early stages of 50S assembly. It makes multiple contacts with different domains of the 23S rRNA in the assembled 50S subunit and ribosome. In terms of biological role, forms part of the polypeptide exit tunnel. In Bacteroides thetaiotaomicron (strain ATCC 29148 / DSM 2079 / JCM 5827 / CCUG 10774 / NCTC 10582 / VPI-5482 / E50), this protein is Large ribosomal subunit protein uL4.